A 339-amino-acid chain; its full sequence is Biotin synthase (339 aa).

A Radical SAM core domain is found at 55 to 288 (LSEGALHSCS…GKIIKFAAGR (234 aa)). Residues Cys-73, Cys-77, and Cys-80 each coordinate [4Fe-4S] cluster. [2Fe-2S] cluster contacts are provided by Cys-152, Cys-213, and Lys-283.

This sequence belongs to the radical SAM superfamily. Biotin synthase family. As to quaternary structure, homodimer. It depends on [4Fe-4S] cluster as a cofactor. [2Fe-2S] cluster is required as a cofactor.

It carries out the reaction (4R,5S)-dethiobiotin + (sulfur carrier)-SH + 2 reduced [2Fe-2S]-[ferredoxin] + 2 S-adenosyl-L-methionine = (sulfur carrier)-H + biotin + 2 5'-deoxyadenosine + 2 L-methionine + 2 oxidized [2Fe-2S]-[ferredoxin]. It participates in cofactor biosynthesis; biotin biosynthesis; biotin from 7,8-diaminononanoate: step 2/2. Catalyzes the conversion of dethiobiotin (DTB) to biotin by the insertion of a sulfur atom into dethiobiotin via a radical-based mechanism. This Chlorobium phaeobacteroides (strain BS1) protein is Biotin synthase.